We begin with the raw amino-acid sequence, 96 residues long: Fluoride-specific ion channel FluC 1 (96 aa).

2 helical membrane-spanning segments follow: residues 4 to 24 (LIQG…RLAL) and 26 to 46 (LWLG…AFLM). Positions 61 and 64 each coordinate Na(+). Residues 69–89 (MMLNDVSFYFFTAVGCILAWL) form a helical membrane-spanning segment.

This sequence belongs to the fluoride channel Fluc/FEX (TC 1.A.43) family.

It localises to the cell membrane. It catalyses the reaction fluoride(in) = fluoride(out). With respect to regulation, na(+) is not transported, but it plays an essential structural role and its presence is essential for fluoride channel function. Functionally, fluoride-specific ion channel. Important for reducing fluoride concentration in the cell, thus reducing its toxicity. The sequence is that of Fluoride-specific ion channel FluC 1 from Corynebacterium glutamicum (strain ATCC 13032 / DSM 20300 / JCM 1318 / BCRC 11384 / CCUG 27702 / LMG 3730 / NBRC 12168 / NCIMB 10025 / NRRL B-2784 / 534).